A 418-amino-acid polypeptide reads, in one-letter code: Actin-related protein 3 (418 aa).

A2 is modified (N-acetylalanine). An N6-acetyllysine mark is found at K240, K244, K251, and K254.

This sequence belongs to the actin family. ARP3 subfamily. In terms of assembly, component of the Arp2/3 complex composed of ACTR2/ARP2, ACTR3/ARP3, ARPC1B/p41-ARC, ARPC2/p34-ARC, ARPC3/p21-ARC, ARPC4/p20-ARC and ARPC5/p16-ARC. Interacts with WHDC1. Interacts weakly with MEFV. Interacts with AVIL.

The protein localises to the cytoplasm. The protein resides in the cytoskeleton. It is found in the cell projection. Its subcellular location is the nucleus. In terms of biological role, ATP-binding component of the Arp2/3 complex, a multiprotein complex that mediates actin polymerization upon stimulation by nucleation-promoting factor (NPF). The Arp2/3 complex mediates the formation of branched actin networks in the cytoplasm, providing the force for cell motility. Seems to contact the pointed end of the daughter actin filament. In podocytes, required for the formation of lamellipodia downstream of AVIL and PLCE1 regulation. In addition to its role in the cytoplasmic cytoskeleton, the Arp2/3 complex also promotes actin polymerization in the nucleus, thereby regulating gene transcription and repair of damaged DNA. The Arp2/3 complex promotes homologous recombination (HR) repair in response to DNA damage by promoting nuclear actin polymerization, leading to drive motility of double-strand breaks (DSBs). Plays a role in ciliogenesis. The sequence is that of Actin-related protein 3 (ACTR3) from Bos taurus (Bovine).